We begin with the raw amino-acid sequence, 307 residues long: Lipid droplet-associated hydrolase (307 aa).

Ser119 serves as the catalytic Nucleophile. Residues 157–200 (GWVFTKVAMPLYSVFGYIFFSFFNFLPVWLRLMLIQIYFLIFSI) form a potential amphipathic helix required for binding to lipid droplets region. 2 consecutive transmembrane segments (helical) span residues 166–186 (PLYSVFGYIFFSFFNFLPVWL) and 188–208 (LMLIQIYFLIFSIPRQFLGTA). Residues Asp254 and His283 each act as charge relay system in the active site.

The protein belongs to the AB hydrolase superfamily. LDAH family. As to quaternary structure, interacts with the juvenile hormone hydrolase enzymes Jheh1 and Jheh2. Also interacts with Hmu, Cpr, Gp93 and Pvr. Expressed in accessory glands.

Its subcellular location is the lipid droplet. It localises to the endoplasmic reticulum membrane. It catalyses the reaction a cholesterol ester + H2O = cholesterol + a fatty acid + H(+). Functionally, probable serine lipid hydrolase associated with lipid droplets. Appears to lack or have very low cholesterol esterase activity. Appears to lack triglyceride lipase activity. Involved in cholesterol and triglyceride homeostasis; stimulates cellular triglyceride accumulation and cellular cholesterol release. Involved in negatively regulating juvenile hormone (JH) and possibly, insulin signaling activities such as triacylglycerols (TAG) storage, and thereby plays a role in the endocrine regulation of organismal growth and survival. Likely functions by enhancing the activity of the JH hydrolase enzymes Jheh1 and Jheh2. Required for lipid droplet positioning and fat storage. The protein is Lipid droplet-associated hydrolase of Drosophila melanogaster (Fruit fly).